Consider the following 238-residue polypeptide: Ribonuclease PH (238 aa).

Phosphate is bound by residues Arg86 and 124-126 (GTR).

Belongs to the RNase PH family. Homohexameric ring arranged as a trimer of dimers.

It carries out the reaction tRNA(n+1) + phosphate = tRNA(n) + a ribonucleoside 5'-diphosphate. Functionally, phosphorolytic 3'-5' exoribonuclease that plays an important role in tRNA 3'-end maturation. Removes nucleotide residues following the 3'-CCA terminus of tRNAs; can also add nucleotides to the ends of RNA molecules by using nucleoside diphosphates as substrates, but this may not be physiologically important. Probably plays a role in initiation of 16S rRNA degradation (leading to ribosome degradation) during starvation. The sequence is that of Ribonuclease PH from Psychrobacter cryohalolentis (strain ATCC BAA-1226 / DSM 17306 / VKM B-2378 / K5).